Reading from the N-terminus, the 280-residue chain is Large ribosomal subunit protein uL2 (280 aa).

Disordered stretches follow at residues 32-54 (SLLVPNKSTGGRNNNGRVTSRHM) and 221-280 (RGMA…DSKK). Positions 37-49 (NKSTGGRNNNGRV) are enriched in polar residues. Gly residues predominate over residues 232–242 (MGGGEGKSKSG). A compositionally biased stretch (basic residues) spans 257-280 (KGLKTRKRKKASSKLIVRRRDSKK).

Belongs to the universal ribosomal protein uL2 family. As to quaternary structure, part of the 50S ribosomal subunit. Forms a bridge to the 30S subunit in the 70S ribosome.

In terms of biological role, one of the primary rRNA binding proteins. Required for association of the 30S and 50S subunits to form the 70S ribosome, for tRNA binding and peptide bond formation. It has been suggested to have peptidyltransferase activity; this is somewhat controversial. Makes several contacts with the 16S rRNA in the 70S ribosome. The polypeptide is Large ribosomal subunit protein uL2 (Chloroherpeton thalassium (strain ATCC 35110 / GB-78)).